Reading from the N-terminus, the 445-residue chain is Phosphoglucosamine mutase (445 aa).

The active-site Phosphoserine intermediate is the Ser102. Mg(2+) is bound by residues Ser102, Asp241, Asp243, and Asp245. Residue Ser102 is modified to Phosphoserine.

The protein belongs to the phosphohexose mutase family. The cofactor is Mg(2+). Activated by phosphorylation.

The catalysed reaction is alpha-D-glucosamine 1-phosphate = D-glucosamine 6-phosphate. Functionally, catalyzes the conversion of glucosamine-6-phosphate to glucosamine-1-phosphate. The polypeptide is Phosphoglucosamine mutase (Shewanella halifaxensis (strain HAW-EB4)).